The chain runs to 253 residues: Chemokine-binding protein (253 aa).

A signal peptide spans 1 to 17 (MKQYIVLACMCLAAAAM). Residues 62-87 (TEITESESDPEVESEDDSTSVEDVDP) form a disordered region. Acidic residues predominate over residues 65–86 (TESESDPEVESEDDSTSVEDVD).

It belongs to the orthopoxvirus OPG001 family. As to quaternary structure, binds to host CC chemokines, such as RANTES/CCL5, MIP-1alpha/CCL3, MCP-1/CCL2 and eotaxin.

The protein resides in the secreted. Inhibits host immune defense by binding to host chemokines. Binds host CC chemokines (beta chemokines) such as RANTES with high affinity, but not CXC or C chemokines (alpha and gamma chemokines). The sequence is that of Chemokine-binding protein (OPG001) from Variola virus (isolate Human/India/Ind3/1967) (VARV).